The primary structure comprises 606 residues: Adenine deaminase (606 aa).

It belongs to the metallo-dependent hydrolases superfamily. Adenine deaminase family. Requires Mn(2+) as cofactor.

The enzyme catalyses adenine + H2O + H(+) = hypoxanthine + NH4(+). The polypeptide is Adenine deaminase (Rubrobacter xylanophilus (strain DSM 9941 / JCM 11954 / NBRC 16129 / PRD-1)).